The sequence spans 1487 residues: Protein clueless (1487 aa).

Disordered stretches follow at residues 1–94 (MALE…NGDA) and 110–140 (GATAAAGATEAAAEVGSSGDGGAATEGEAAA). Positions 56–65 (TKKKGKKNRN) are enriched in basic residues. Low complexity predominate over residues 111-126 (ATAAAGATEAAAEVGS). The residue at position 284 (S284) is a Phosphoserine. The Clu domain occupies 438 to 680 (RAEDAFSSKL…RTFPPDVNFL (243 aa)). Positions 739 to 785 (QAEKELPSITEKQEEPEKEQAEKSSAEQPEKEKEKEKDKEDEQKESK) are enriched in basic and acidic residues. 2 disordered regions span residues 739 to 794 (QAEK…TKSA) and 980 to 1040 (VSSE…TAST). The span at 988–1005 (KQSRNNGGKHNKHNKSNK) shows a compositional bias: basic residues. Polar residues predominate over residues 1009–1019 (PQSTSAAAATQ). Positions 1020 to 1040 (NGHSSTAANGSANSAANTAST) are enriched in low complexity. 3 TPR repeats span residues 1140-1173 (AYNFYTTGQAKIQQGLLKEGYELISEALNLLNNV), 1266-1299 (ALIDSNISLILHALGEYELSLRFIEHALKLNLKY), and 1301-1334 (GNKAMHVAVSYHLMARIQSCMGDFRSALNNEKET). The tract at residues 1456–1487 (DTEQPKEGSEVEGATATQLTNGSEDSTTTVSS) is disordered. Residues 1470–1487 (TATQLTNGSEDSTTTVSS) show a composition bias toward polar residues.

This sequence belongs to the CLU family.

It localises to the cytoplasm. In terms of biological role, mRNA-binding protein involved in proper cytoplasmic distribution of mitochondria. This Drosophila mojavensis (Fruit fly) protein is Protein clueless.